We begin with the raw amino-acid sequence, 202 residues long: Probable nicotinate-nucleotide adenylyltransferase (202 aa).

Belongs to the NadD family.

The enzyme catalyses nicotinate beta-D-ribonucleotide + ATP + H(+) = deamido-NAD(+) + diphosphate. The protein operates within cofactor biosynthesis; NAD(+) biosynthesis; deamido-NAD(+) from nicotinate D-ribonucleotide: step 1/1. In terms of biological role, catalyzes the reversible adenylation of nicotinate mononucleotide (NaMN) to nicotinic acid adenine dinucleotide (NaAD). This is Probable nicotinate-nucleotide adenylyltransferase from Clostridium perfringens (strain SM101 / Type A).